Consider the following 428-residue polypeptide: Serine--tRNA ligase (428 aa).

235–237 provides a ligand contact to L-serine; it reads TAE. 266–268 contacts ATP; that stretch reads RSE. Glu-289 is an L-serine binding site. An ATP-binding site is contributed by 353–356; sequence EISS. Ser-389 is a binding site for L-serine.

It belongs to the class-II aminoacyl-tRNA synthetase family. Type-1 seryl-tRNA synthetase subfamily. Homodimer. The tRNA molecule binds across the dimer.

It localises to the cytoplasm. The enzyme catalyses tRNA(Ser) + L-serine + ATP = L-seryl-tRNA(Ser) + AMP + diphosphate + H(+). It carries out the reaction tRNA(Sec) + L-serine + ATP = L-seryl-tRNA(Sec) + AMP + diphosphate + H(+). Its pathway is aminoacyl-tRNA biosynthesis; selenocysteinyl-tRNA(Sec) biosynthesis; L-seryl-tRNA(Sec) from L-serine and tRNA(Sec): step 1/1. Catalyzes the attachment of serine to tRNA(Ser). Is also able to aminoacylate tRNA(Sec) with serine, to form the misacylated tRNA L-seryl-tRNA(Sec), which will be further converted into selenocysteinyl-tRNA(Sec). This chain is Serine--tRNA ligase, found in Shewanella baltica (strain OS155 / ATCC BAA-1091).